Consider the following 104-residue polypeptide: Flagellar hook-basal body complex protein FliE (104 aa).

This sequence belongs to the FliE family.

The protein resides in the bacterial flagellum basal body. In Salmonella typhi, this protein is Flagellar hook-basal body complex protein FliE.